We begin with the raw amino-acid sequence, 151 residues long: Ribosome maturation factor RimP (151 aa).

This sequence belongs to the RimP family.

The protein localises to the cytoplasm. Its function is as follows. Required for maturation of 30S ribosomal subunits. The polypeptide is Ribosome maturation factor RimP (Shewanella putrefaciens (strain CN-32 / ATCC BAA-453)).